We begin with the raw amino-acid sequence, 931 residues long: Netrin receptor UNC5C (931 aa).

Residues Met-1 to Ala-40 form the signal peptide. Over Gln-41 to Tyr-380 the chain is Extracellular. Residues Pro-62–Tyr-159 form the Ig-like domain. Disulfide bonds link Cys-83-Cys-144, Cys-95-Cys-142, Cys-188-Cys-239, Cys-272-Cys-309, Cys-276-Cys-313, Cys-287-Cys-299, Cys-328-Cys-362, Cys-332-Cys-367, and Cys-340-Cys-352. An Ig-like C2-type domain is found at Arg-161 to Ile-256. N-linked (GlcNAc...) asparagine glycosylation is present at Asn-236. 2 TSP type-1 domains span residues Asn-260 to Pro-314 and Asp-316 to Met-368. N-linked (GlcNAc...) asparagine glycosylation occurs at Asn-361. The chain crosses the membrane as a helical span at residues Val-381–Val-401. Topologically, residues Tyr-402–Tyr-931 are cytoplasmic. The interval Tyr-402–Tyr-931 is required for netrin-mediated axon repulsion of neuronal growth cones. Position 502 is a phosphoserine (Ser-502). In terms of domain architecture, ZU5 spans Cys-530–Ser-673. Tyr-568 is subject to Phosphotyrosine. The interaction with DCC stretch occupies residues Ser-694–Lys-712. The 80-residue stretch at Gln-850–Gly-929 folds into the Death domain.

This sequence belongs to the unc-5 family. In terms of assembly, interacts with DCC (via cytoplasmic domain). Interacts (tyrosine phosphorylated form) with PTPN11. Interacts (via extracellular domain) with FLRT3 (via extracellular domain). Interacts (via Ig-like C2-type domain) with DSCAM (via extracellular domain). Interacts (via death domain) with DAPK1. Interacts (via cytoplasmic domain) with TUBB3; this interaction is decreased by NTN1/Netrin-1. Post-translationally, proteolytically cleaved by caspases during apoptosis. The cleavage does not take place when the receptor is associated with netrin ligand. Its cleavage by caspases is required to induce apoptosis. In terms of processing, phosphorylated on different cytoplasmic tyrosine residues. Phosphorylation of Tyr-568 leads to an interaction with PTPN11 phosphatase, suggesting that its activity is regulated by phosphorylation/dephosphorylation. Tyrosine phosphorylation is netrin-dependent. In terms of tissue distribution, mainly expressed in brain. Expressed in temporal lobe cortical neurons and in neurons of the hippocampal pyramidal layer. Also expressed in kidney. Not expressed in developing or adult lung.

The protein localises to the cell membrane. It localises to the cell surface. The protein resides in the synapse. Its subcellular location is the synaptosome. It is found in the cell projection. The protein localises to the axon. It localises to the dendrite. The protein resides in the growth cone. Its subcellular location is the lamellipodium. It is found in the filopodium. Functionally, receptor for netrin required for axon guidance. Mediates axon repulsion of neuronal growth cones in the developing nervous system upon ligand binding. NTN1/Netrin-1 binding might cause dissociation of UNC5C from polymerized TUBB3 in microtubules and thereby lead to increased microtubule dynamics and axon repulsion. Axon repulsion in growth cones may also be caused by its association with DCC that may trigger signaling for repulsion. Might also collaborate with DSCAM in NTN1-mediated axon repulsion independently of DCC. Also involved in corticospinal tract axon guidance independently of DCC. Involved in dorsal root ganglion axon projection towards the spinal cord. It also acts as a dependence receptor required for apoptosis induction when not associated with netrin ligand. The polypeptide is Netrin receptor UNC5C (UNC5C) (Homo sapiens (Human)).